Consider the following 480-residue polypeptide: Iron-sulfur cluster assembly SufBD family protein slr0074 (480 aa).

It belongs to the iron-sulfur cluster assembly SufBD family.

In Synechocystis sp. (strain ATCC 27184 / PCC 6803 / Kazusa), this protein is Iron-sulfur cluster assembly SufBD family protein slr0074.